A 215-amino-acid chain; its full sequence is Pyrrolidone-carboxylate peptidase (215 aa).

Active-site residues include E80, C143, and H167.

It belongs to the peptidase C15 family. As to quaternary structure, homotetramer.

It localises to the cytoplasm. The enzyme catalyses Release of an N-terminal pyroglutamyl group from a polypeptide, the second amino acid generally not being Pro.. Its function is as follows. Removes 5-oxoproline from various penultimate amino acid residues except L-proline. The chain is Pyrrolidone-carboxylate peptidase from Bacillus cereus (strain 03BB102).